We begin with the raw amino-acid sequence, 178 residues long: Mediator of RNA polymerase II transcription subunit 28 (178 aa).

The tract at residues Met1 to Gly25 is disordered. Residues Gln109–Asp145 are a coiled coil.

It belongs to the Mediator complex subunit 28 family. As to quaternary structure, component of the Mediator complex, which is composed of MED1, MED4, MED6, MED7, MED8, MED9, MED10, MED11, MED12, MED13, MED13L, MED14, MED15, MED16, MED17, MED18, MED19, MED20, MED21, MED22, MED23, MED24, MED25, MED26, MED27, MED29, MED30, MED31, CCNC, CDK8 and CDC2L6/CDK11. The MED12, MED13, CCNC and CDK8 subunits form a distinct module termed the CDK8 module. Mediator containing the CDK8 module is less active than Mediator lacking this module in supporting transcriptional activation. Individual preparations of the Mediator complex lacking one or more distinct subunits have been variously termed ARC, CRSP, DRIP, PC2, SMCC and TRAP. Forms a ternary complex with NF2/merlin and GRB2. Binds to actin.

It is found in the nucleus. It localises to the cytoplasm. The protein resides in the membrane. Its function is as follows. Component of the Mediator complex, a coactivator involved in the regulated transcription of nearly all RNA polymerase II-dependent genes. Mediator functions as a bridge to convey information from gene-specific regulatory proteins to the basal RNA polymerase II transcription machinery. Mediator is recruited to promoters by direct interactions with regulatory proteins and serves as a scaffold for the assembly of a functional preinitiation complex with RNA polymerase II and the general transcription factors. May be part of a complex containing NF2/merlin that participates in cellular signaling to the actin cytoskeleton downstream of tyrosine kinase signaling pathways. This Bos taurus (Bovine) protein is Mediator of RNA polymerase II transcription subunit 28 (MED28).